A 410-amino-acid chain; its full sequence is Arginine deiminase (410 aa).

Catalysis depends on cysteine 399, which acts as the Amidino-cysteine intermediate.

The protein belongs to the arginine deiminase family.

The protein resides in the cytoplasm. The enzyme catalyses L-arginine + H2O = L-citrulline + NH4(+). The protein operates within amino-acid degradation; L-arginine degradation via ADI pathway; carbamoyl phosphate from L-arginine: step 1/2. In Listeria monocytogenes serovar 1/2a (strain ATCC BAA-679 / EGD-e), this protein is Arginine deiminase.